The sequence spans 234 residues: 3,4-dihydroxy-2-butanone 4-phosphate synthase (234 aa).

Residues Arg39–Glu40, Asp44, Arg152–Thr156, and Glu176 each bind D-ribulose 5-phosphate. Residue Glu40 participates in Mg(2+) binding. His155 contributes to the Mg(2+) binding site.

The protein belongs to the DHBP synthase family. As to quaternary structure, homodimer. Requires Mg(2+) as cofactor. Mn(2+) serves as cofactor.

It carries out the reaction D-ribulose 5-phosphate = (2S)-2-hydroxy-3-oxobutyl phosphate + formate + H(+). It functions in the pathway cofactor biosynthesis; riboflavin biosynthesis; 2-hydroxy-3-oxobutyl phosphate from D-ribulose 5-phosphate: step 1/1. Functionally, catalyzes the conversion of D-ribulose 5-phosphate to formate and 3,4-dihydroxy-2-butanone 4-phosphate. The sequence is that of 3,4-dihydroxy-2-butanone 4-phosphate synthase from Pelobacter propionicus (strain DSM 2379 / NBRC 103807 / OttBd1).